We begin with the raw amino-acid sequence, 723 residues long: Solute carrier organic anion transporter family member 4A1 (723 aa).

Over 1 to 102 the chain is Cytoplasmic; sequence MPQHAMGDTH…KCLQVFNTPK (102 aa). The interval 23-64 is disordered; it reads SSATDSGCDTPPSSRASPASLRSAHGTLGSSSQPLFEPQAEK. Residues 33–46 show a composition bias toward low complexity; the sequence is PPSSRASPASLRSA. 3 positions are modified to phosphoserine: Ser39, Ser42, and Ser45. The helical transmembrane segment at 103-123 threads the bilayer; sequence GFLFFLCAASFLQGMTVNGFI. Residues 124–142 lie on the Extracellular side of the membrane; sequence NTVITSIERRFDLHSYQSG. A helical membrane pass occupies residues 143-163; it reads LIASSYDIAACLCLTFVSYFG. Residues 164–169 lie on the Cytoplasmic side of the membrane; it reads GNGHKP. The chain crosses the membrane as a helical span at residues 170 to 194; that stretch reads RWLGWGVLVLGIGSLVFALPHFTAG. The Extracellular segment spans residues 195–224; the sequence is RYEVEMDEGLGTGTCLTNQSHVECKDSASG. N-linked (GlcNAc...) asparagine glycosylation occurs at Asn212. Residues 225 to 255 form a helical membrane-spanning segment; that stretch reads LSNYRLIFMLGQLLHGVGATPLYTLGVTYLD. Residues 256–274 are Cytoplasmic-facing; it reads ENVKSSYSPIYIAIFYTAA. A helical membrane pass occupies residues 275–295; sequence ILGPAAGYLIGGAMLNVYTEV. At 296–309 the chain is on the extracellular side; that stretch reads GQRTELTTDSPLWV. A helical transmembrane segment spans residues 310 to 334; the sequence is GAWWIGFLGTGIAAFLIAIPILGYP. The Cytoplasmic segment spans residues 335–380; it reads RQLPGSQRYVVMRAAETQQLKDHSRGAVSNPAFGKTVRDLPLSIWL. A helical transmembrane segment spans residues 381-402; the sequence is LLRNPTFILLCLAGATEATLIA. Topologically, residues 403-422 are extracellular; it reads GMSTFGPKFFEAQFSLSASE. The helical transmembrane segment at 423–446 threads the bilayer; it reads AATLFGYLVVPAGGGGTLLGGFLV. At 447 to 450 the chain is on the cytoplasmic side; that stretch reads NKFK. Residues 451-473 form a helical membrane-spanning segment; sequence LRGSGIIRFCLFCTLTSLLAFFV. The Extracellular portion of the chain corresponds to 474 to 582; it reads FLMHCPNVHM…ASTCQSKPFL (109 aa). The Kazal-like domain occupies 500-557; that stretch reads LDLKAACNAIYCCQPKHYSPLCGSDGTMYYSPCYAGCPADAETDLGGQKVYRGCSCIL. 2 cysteine pairs are disulfide-bonded: Cys506–Cys536 and Cys521–Cys555. An N-linked (GlcNAc...) asparagine glycan is attached at Asn566. Residues 583-605 form a helical membrane-spanning segment; it reads LVLVFVVIIFTFLSSIPALTATL. Over 606–614 the chain is Cytoplasmic; that stretch reads RCVSDRQRS. A helical transmembrane segment spans residues 615-640; that stretch reads FALGIQWIVVRTLGSIPGPIAFGWVI. At 641–673 the chain is on the extracellular side; the sequence is DKACLLWQDQCGHQGSCFVYENEAMSRYMLIAG. A helical membrane pass occupies residues 674-691; sequence LTFKVLGFLFFVAAYFLY. The Cytoplasmic segment spans residues 692 to 723; that stretch reads KSPSVSSDGLEASLPSQSSASDSPTEQLQSNV. The disordered stretch occupies residues 700 to 723; the sequence is GLEASLPSQSSASDSPTEQLQSNV. Low complexity predominate over residues 701 to 723; it reads LEASLPSQSSASDSPTEQLQSNV.

Belongs to the organo anion transporter (TC 2.A.60) family.

The protein localises to the cell membrane. The catalysed reaction is 3,3',5-triiodo-L-thyronine(out) + L-glutamate(in) = 3,3',5-triiodo-L-thyronine(in) + L-glutamate(out). It catalyses the reaction L-thyroxine(out) + L-glutamate(in) = L-thyroxine(in) + L-glutamate(out). The enzyme catalyses estrone 3-sulfate(out) + L-glutamate(in) = estrone 3-sulfate(in) + L-glutamate(out). It carries out the reaction taurocholate(out) + L-glutamate(in) = taurocholate(in) + L-glutamate(out). The catalysed reaction is 3,3',5-triiodo-L-thyronine(out) = 3,3',5-triiodo-L-thyronine(in). It catalyses the reaction L-thyroxine(out) = L-thyroxine(in). The enzyme catalyses 3,3',5'-triiodo-L-thyronine(out) = 3,3',5'-triiodo-L-thyronine(in). It carries out the reaction estrone 3-sulfate(out) = estrone 3-sulfate(in). The catalysed reaction is 17beta-estradiol 17-O-(beta-D-glucuronate)(out) = 17beta-estradiol 17-O-(beta-D-glucuronate)(in). It catalyses the reaction taurocholate(out) = taurocholate(in). The enzyme catalyses prostaglandin E2(out) = prostaglandin E2(in). Its function is as follows. Organic anion antiporter with apparent broad substrate specificity. Recognizes various substrates including thyroid hormones 3,3',5-triiodo-L-thyronine (T3), L-thyroxine (T4) and 3,3',5'-triiodo-L-thyronine (rT3), conjugated steroids such as estrone 3-sulfate and estradiol 17-beta glucuronide, bile acids such as taurocholate and prostanoids such as prostaglandin E2, likely operating in a tissue-specific manner. May be involved in uptake of metabolites from the circulation into organs such as kidney, liver or placenta. Possibly drives the selective transport of thyroid hormones and estrogens coupled to an outward glutamate gradient across the microvillous membrane of the placenta. The transport mechanism, its electrogenicity and potential tissue-specific counterions remain to be elucidated. The sequence is that of Solute carrier organic anion transporter family member 4A1 (Slco4a1) from Mus musculus (Mouse).